The chain runs to 238 residues: Dolichyldiphosphatase 1 (238 aa).

4 helical membrane-spanning segments follow: residues 33 to 53 (LAYL…LIIF), 100 to 120 (PSSH…FLYL), 130 to 150 (FLDL…AFLV), and 162 to 182 (WSQV…WFII).

Belongs to the dolichyldiphosphatase family. Widely expressed with highest levels in brain, kidney, lung and intestine.

It localises to the endoplasmic reticulum membrane. The catalysed reaction is a di-trans,poly-cis-dolichyl diphosphate + H2O = a di-trans,poly-cis-dolichyl phosphate + phosphate + H(+). It participates in protein modification; protein glycosylation. Functionally, required for efficient N-glycosylation. Necessary for maintaining optimal levels of dolichol-linked oligosaccharides. Hydrolyzes dolichyl pyrophosphate at a very high rate and dolichyl monophosphate at a much lower rate. Does not act on phosphatidate. This chain is Dolichyldiphosphatase 1 (Dolpp1), found in Mus musculus (Mouse).